Reading from the N-terminus, the 198-residue chain is Ion-translocating oxidoreductase complex subunit B (198 aa).

Positions 1 to 26 (MTTIMIAVLAIALLATLFGAILGFAS) are hydrophobic. The region spanning 32–90 (EADPIVDQIDAILPQTQCGQCGYPGCRPYAEAIANGDSINKCPPGGQATIEKLADLMGV) is the 4Fe-4S domain. [4Fe-4S] cluster-binding residues include cysteine 49, cysteine 52, cysteine 57, cysteine 73, cysteine 114, cysteine 117, cysteine 120, cysteine 124, cysteine 144, cysteine 147, cysteine 150, and cysteine 154. 4Fe-4S ferredoxin-type domains lie at 105–134 (KVAF…GGTK) and 135–164 (ALHT…MIPL).

Belongs to the 4Fe4S bacterial-type ferredoxin family. RnfB subfamily. In terms of assembly, the complex is composed of six subunits: RnfA, RnfB, RnfC, RnfD, RnfE and RnfG. [4Fe-4S] cluster is required as a cofactor.

The protein resides in the cell inner membrane. In terms of biological role, part of a membrane-bound complex that couples electron transfer with translocation of ions across the membrane. This is Ion-translocating oxidoreductase complex subunit B from Vibrio vulnificus (strain CMCP6).